Reading from the N-terminus, the 294-residue chain is uncharacterized protein (294 aa).

A helical transmembrane segment spans residues Ile-5–Phe-25. N-linked (GlcNAc...) asparagine; by host glycans are attached at residues Asn-151, Asn-170, Asn-205, and Asn-271.

It is found in the membrane. This is an uncharacterized protein from Acanthamoeba polyphaga (Amoeba).